A 103-amino-acid polypeptide reads, in one-letter code: Cell division suppressor protein YneA (103 aa).

One can recognise a LysM domain in the interval 36–87 (VKIEVQEGDTLWELADRIKGGKTADKHKFIEWVADKNNLPTSVIKPGDVLIL).

It belongs to the YneA family.

Its subcellular location is the cytoplasm. Inhibits cell division during the SOS response. Affects a later stage of the cell division protein assembly, after the assembly of the Z ring, by probably suppressing recruitment of FtsL and/or DivIC to the division machinery. This Bacillus licheniformis (strain ATCC 14580 / DSM 13 / JCM 2505 / CCUG 7422 / NBRC 12200 / NCIMB 9375 / NCTC 10341 / NRRL NRS-1264 / Gibson 46) protein is Cell division suppressor protein YneA.